Reading from the N-terminus, the 437-residue chain is Elongation factor 1-gamma (437 aa).

A2 is subject to N-acetylalanine. Residues 2–87 (AAGTLYTYPE…YVSNEELRGS (86 aa)) form the GST N-terminal domain. The region spanning 88–216 (TPEAAAQVVQ…VKLCEKMAQF (129 aa)) is the GST C-terminal domain. An N6-acetyllysine mark is found at K147 and K212. Over residues 221 to 254 (FAESQPKKDTPRKEKGSREEKQKPQAERKEEKKA) the composition is skewed to basic and acidic residues. Residues 221 to 268 (FAESQPKKDTPRKEKGSREEKQKPQAERKEEKKAAAPAPEEEMDECEQ) are disordered. K253 is covalently cross-linked (Glycyl lysine isopeptide (Lys-Gly) (interchain with G-Cter in SUMO1)). Residues 276-437 (AKDPFAHLPK…KAVNQGKIFK (162 aa)) enclose the EF-1-gamma C-terminal domain. A Glycyl lysine isopeptide (Lys-Gly) (interchain with G-Cter in SUMO2) cross-link involves residue K285. The residue at position 401 (K401) is an N6-acetyllysine. K434 is subject to N6-acetyllysine; alternate. K434 is modified (N6-malonyllysine; alternate).

EF-1 is composed of four subunits: alpha, beta, delta, and gamma.

Functionally, probably plays a role in anchoring the complex to other cellular components. The protein is Elongation factor 1-gamma (Eef1g) of Mus musculus (Mouse).